A 106-amino-acid polypeptide reads, in one-letter code: uncharacterized protein (106 aa).

The next 2 helical transmembrane spans lie at 10–30 (VYIQ…VAFV) and 65–85 (LDFA…LLAY).

It localises to the membrane. This is an uncharacterized protein from Saccharomyces cerevisiae (strain ATCC 204508 / S288c) (Baker's yeast).